Here is a 355-residue protein sequence, read N- to C-terminus: Cytoplasmic tRNA 2-thiolation protein 1 (355 aa).

The interval 320–341 is disordered; sequence GIGRPRGVNGDHNKETKKPGSV. Over residues 328 to 337 the composition is skewed to basic and acidic residues; it reads NGDHNKETKK.

It belongs to the TtcA family. CTU1/NCS6/ATPBD3 subfamily.

Its subcellular location is the cytoplasm. It functions in the pathway tRNA modification; 5-methoxycarbonylmethyl-2-thiouridine-tRNA biosynthesis. In terms of biological role, plays a central role in 2-thiolation of mcm(5)S(2)U at tRNA wobble positions of tRNA(Lys), tRNA(Glu) and tRNA(Gln). Directly binds tRNAs and probably acts by catalyzing adenylation of tRNAs, an intermediate required for 2-thiolation. It is unclear whether it acts as a sulfurtransferase that transfers sulfur from thiocarboxylated URM1 onto the uridine of tRNAs at wobble position. This Arabidopsis thaliana (Mouse-ear cress) protein is Cytoplasmic tRNA 2-thiolation protein 1.